We begin with the raw amino-acid sequence, 155 residues long: Urease accessory protein UreE (155 aa).

This sequence belongs to the UreE family.

Its subcellular location is the cytoplasm. Its function is as follows. Involved in urease metallocenter assembly. Binds nickel. Probably functions as a nickel donor during metallocenter assembly. The sequence is that of Urease accessory protein UreE from Deinococcus radiodurans (strain ATCC 13939 / DSM 20539 / JCM 16871 / CCUG 27074 / LMG 4051 / NBRC 15346 / NCIMB 9279 / VKM B-1422 / R1).